A 38-amino-acid polypeptide reads, in one-letter code: ATP synthase subunit O, mitochondrial (38 aa).

It belongs to the ATPase delta chain family. F-type ATPases have 2 components, CF(1) - the catalytic core - and CF(0) - the membrane proton channel. CF(1) has five subunits: alpha(3), beta(3), gamma(1), delta(1), epsilon(1). CF(0) has three main subunits: a, b and c.

It is found in the mitochondrion. Its subcellular location is the mitochondrion inner membrane. In terms of biological role, mitochondrial membrane ATP synthase (F(1)F(0) ATP synthase or Complex V) produces ATP from ADP in the presence of a proton gradient across the membrane which is generated by electron transport complexes of the respiratory chain. F-type ATPases consist of two structural domains, F(1) - containing the extramembraneous catalytic core and F(0) - containing the membrane proton channel, linked together by a central stalk and a peripheral stalk. During catalysis, ATP synthesis in the catalytic domain of F(1) is coupled via a rotary mechanism of the central stalk subunits to proton translocation. Part of the complex F(0) domain and the peripheric stalk, which acts as a stator to hold the catalytic alpha(3)beta(3) subcomplex and subunit a/ATP6 static relative to the rotary elements. This is ATP synthase subunit O, mitochondrial from Pisum sativum (Garden pea).